The sequence spans 192 residues: uncharacterized protein (192 aa).

Disordered regions lie at residues 1 to 37 and 146 to 192; these read MASS…PAFP and ARGP…EQNK. Pro residues-rich tracts occupy residues 8-19 and 159-180; these read TPSPAGLPPPSV and APPP…PGWP.

This is an uncharacterized protein from Homo sapiens (Human).